Reading from the N-terminus, the 259-residue chain is Thiazole synthase (259 aa).

K99 acts as the Schiff-base intermediate with DXP in catalysis. 1-deoxy-D-xylulose 5-phosphate-binding positions include G160, 186-187 (AG), and 208-209 (NT).

This sequence belongs to the ThiG family. In terms of assembly, homotetramer. Forms heterodimers with either ThiH or ThiS.

Its subcellular location is the cytoplasm. The enzyme catalyses [ThiS sulfur-carrier protein]-C-terminal-Gly-aminoethanethioate + 2-iminoacetate + 1-deoxy-D-xylulose 5-phosphate = [ThiS sulfur-carrier protein]-C-terminal Gly-Gly + 2-[(2R,5Z)-2-carboxy-4-methylthiazol-5(2H)-ylidene]ethyl phosphate + 2 H2O + H(+). It functions in the pathway cofactor biosynthesis; thiamine diphosphate biosynthesis. Its function is as follows. Catalyzes the rearrangement of 1-deoxy-D-xylulose 5-phosphate (DXP) to produce the thiazole phosphate moiety of thiamine. Sulfur is provided by the thiocarboxylate moiety of the carrier protein ThiS. In vitro, sulfur can be provided by H(2)S. This is Thiazole synthase from Porphyromonas gingivalis (strain ATCC 33277 / DSM 20709 / CIP 103683 / JCM 12257 / NCTC 11834 / 2561).